Consider the following 437-residue polypeptide: Serine hydroxymethyltransferase (437 aa).

(6S)-5,6,7,8-tetrahydrofolate contacts are provided by residues leucine 130 and 134-136; that span reads GHL. N6-(pyridoxal phosphate)lysine is present on lysine 239.

It belongs to the SHMT family. Homodimer. It depends on pyridoxal 5'-phosphate as a cofactor.

It localises to the cytoplasm. The catalysed reaction is (6R)-5,10-methylene-5,6,7,8-tetrahydrofolate + glycine + H2O = (6S)-5,6,7,8-tetrahydrofolate + L-serine. It functions in the pathway one-carbon metabolism; tetrahydrofolate interconversion. The protein operates within amino-acid biosynthesis; glycine biosynthesis; glycine from L-serine: step 1/1. In terms of biological role, catalyzes the reversible interconversion of serine and glycine with tetrahydrofolate (THF) serving as the one-carbon carrier. This reaction serves as the major source of one-carbon groups required for the biosynthesis of purines, thymidylate, methionine, and other important biomolecules. Also exhibits THF-independent aldolase activity toward beta-hydroxyamino acids, producing glycine and aldehydes, via a retro-aldol mechanism. The sequence is that of Serine hydroxymethyltransferase from Bartonella tribocorum (strain CIP 105476 / IBS 506).